The sequence spans 327 residues: Ribose-phosphate pyrophosphokinase (327 aa).

An ATP-binding site is contributed by 51–53 (DGE). Mg(2+)-binding residues include His-144 and Asp-183. Lys-207 is a catalytic residue. Residues Arg-209, Asp-233, and 237–241 (DTGGT) contribute to the D-ribose 5-phosphate site.

Belongs to the ribose-phosphate pyrophosphokinase family. Class I subfamily. As to quaternary structure, homohexamer. It depends on Mg(2+) as a cofactor.

It is found in the cytoplasm. It catalyses the reaction D-ribose 5-phosphate + ATP = 5-phospho-alpha-D-ribose 1-diphosphate + AMP + H(+). The protein operates within metabolic intermediate biosynthesis; 5-phospho-alpha-D-ribose 1-diphosphate biosynthesis; 5-phospho-alpha-D-ribose 1-diphosphate from D-ribose 5-phosphate (route I): step 1/1. Involved in the biosynthesis of the central metabolite phospho-alpha-D-ribosyl-1-pyrophosphate (PRPP) via the transfer of pyrophosphoryl group from ATP to 1-hydroxyl of ribose-5-phosphate (Rib-5-P). The polypeptide is Ribose-phosphate pyrophosphokinase (Prochlorococcus marinus (strain SARG / CCMP1375 / SS120)).